Consider the following 679-residue polypeptide: Methionine--tRNA ligase (679 aa).

A 'HIGH' region motif is present at residues 14-24; it reads PYANGSIHLGH. Positions 145, 148, 158, and 161 each coordinate Zn(2+). The 'KMSKS' region signature appears at 331–335; the sequence is KMSKS. An ATP-binding site is contributed by Lys334. Residues 577–679 enclose the tRNA-binding domain; it reads TFAAVDLRVA…SGAKPGQRIK (103 aa).

It belongs to the class-I aminoacyl-tRNA synthetase family. MetG type 1 subfamily. Homodimer. Zn(2+) serves as cofactor.

It is found in the cytoplasm. It carries out the reaction tRNA(Met) + L-methionine + ATP = L-methionyl-tRNA(Met) + AMP + diphosphate. Is required not only for elongation of protein synthesis but also for the initiation of all mRNA translation through initiator tRNA(fMet) aminoacylation. This chain is Methionine--tRNA ligase, found in Pseudomonas putida (strain ATCC 700007 / DSM 6899 / JCM 31910 / BCRC 17059 / LMG 24140 / F1).